The primary structure comprises 584 residues: Beta-(1--&gt;2)glucan export ATP-binding/permease protein NdvA (584 aa).

One can recognise an ABC transmembrane type-1 domain in the interval Val-21–Glu-301. 6 helical membrane passes run Ile-29 to Ile-49, Asp-57 to Ala-77, Thr-136 to Val-156, Leu-158 to Asp-178, Ile-248 to Gly-268, and Val-272 to Met-292. Residues Val-335–Thr-569 form the ABC transporter domain. Residue Gly-368–Thr-375 participates in ATP binding.

It belongs to the ABC transporter superfamily. Beta-(1--&gt;2)glucan exporter (TC 3.A.1.108.1) family. As to quaternary structure, homodimer.

The protein localises to the cell inner membrane. The catalysed reaction is [(1-&gt;2)-beta-D-glucosyl](n)(in) + ATP + H2O = [(1-&gt;2)-beta-D-glucosyl](n)(out) + ADP + phosphate + H(+). Involved in beta-(1--&gt;2)glucan export. Transmembrane domains (TMD) form a pore in the inner membrane and the ATP-binding domain (NBD) is responsible for energy generation. This chain is Beta-(1--&gt;2)glucan export ATP-binding/permease protein NdvA, found in Agrobacterium vitis (Rhizobium vitis).